We begin with the raw amino-acid sequence, 300 residues long: Phospholipase A1 (300 aa).

An intrachain disulfide couples Cys4 to Cys87. Ser137 serves as the catalytic Nucleophile. The active-site Charge relay system is the Asp165. Intrachain disulfides connect Cys176–Cys181 and Cys219–Cys227. The active-site Charge relay system is the His229. Cystine bridges form between Cys244–Cys268, Cys245–Cys293, and Cys261–Cys266.

It belongs to the AB hydrolase superfamily. Lipase family. As to expression, expressed by the venom gland.

Its subcellular location is the secreted. The enzyme catalyses a 1,2-diacyl-sn-glycero-3-phosphocholine + H2O = a 2-acyl-sn-glycero-3-phosphocholine + a fatty acid + H(+). Its function is as follows. Catalyzes the hydrolysis of phosphatidylcholine with phospholipase A1 activity. May act as an allergen and induce hemolytic activity. This is Phospholipase A1 from Vespula maculifrons (Eastern yellow jacket).